The sequence spans 315 residues: Microtubule-associated protein Jupiter (315 aa).

Positions 1 to 14 are enriched in polar residues; the sequence is MISNFDCTDNQASS. 2 disordered regions span residues 1-37 and 51-89; these read MISNFDCTDNQASSKVLRPPGGGSSDIFGSEMPQTPR and EKDNGVKNNGDAPRRGQKTVDSHSRLFGEPTRPITPGKN. S24 bears the Phosphoserine mark. A Phosphothreonine modification is found at T35. The span at 62–76 shows a compositional bias: basic and acidic residues; it reads APRRGQKTVDSHSRL. Residues T81 and T85 each carry the phosphothreonine modification. Phosphoserine is present on residues S94, S122, and S133. Disordered regions lie at residues 116 to 166 and 272 to 315; these read YNGK…ADDA and EGNP…SGLW. Residues 120 to 133 are compositionally biased toward low complexity; the sequence is SGSVSSASSSVSSS. 2 stretches are compositionally biased toward polar residues: residues 134–148 and 285–296; these read TENLKMNSGSRSVFR and DFTQRQESSNGG.

The protein belongs to the MAP Jupiter family.

It is found in the nucleus. The protein resides in the cytoplasm. The protein localises to the cytoskeleton. Its subcellular location is the spindle. Binds to all microtubule populations. The polypeptide is Microtubule-associated protein Jupiter (Drosophila sechellia (Fruit fly)).